The primary structure comprises 160 residues: Endoribonuclease YbeY (160 aa).

Zn(2+) is bound by residues histidine 125, histidine 129, and histidine 135.

Belongs to the endoribonuclease YbeY family. The cofactor is Zn(2+).

It localises to the cytoplasm. Functionally, single strand-specific metallo-endoribonuclease involved in late-stage 70S ribosome quality control and in maturation of the 3' terminus of the 16S rRNA. This is Endoribonuclease YbeY from Leuconostoc mesenteroides subsp. mesenteroides (strain ATCC 8293 / DSM 20343 / BCRC 11652 / CCM 1803 / JCM 6124 / NCDO 523 / NBRC 100496 / NCIMB 8023 / NCTC 12954 / NRRL B-1118 / 37Y).